A 501-amino-acid chain; its full sequence is Microtubule-associated protein mmb1 (501 aa).

Polar residues-rich tracts occupy residues 61–95 (NISSPSVPTSQSRVTQGQSLGNTQISNPTSKTNNV), 103–122 (RNPSQRLRPSTSLARLSNNA), and 132–168 (HENSISSKESPSVTTSKHVATITKPSTSSIARMSSNA). Disordered stretches follow at residues 61 to 274 (NISS…VKVN), 328 to 381 (VSRN…TTGN), and 478 to 501 (NQTSEINDTNHSSHSSPLDLNRMI). Low complexity predominate over residues 234 to 252 (SSVVRPPTRTSTTRPLSRV). Composition is skewed to polar residues over residues 253 to 274 (NVTNASGSISKNSTSPSKVKVN), 367 to 381 (SRIQSTLSSRTTTGN), and 478 to 495 (NQTSEINDTNHSSHSSPL).

It is found in the cytoplasm. Its subcellular location is the cytoskeleton. Its function is as follows. Involved in the cell polarity process and in regulation of microtubule growth. Has a role in meiosis. Involved in microtubule dynamics. Binds to mitochondria and microtubules, attaching the tubular mitochondria to the microtubule lattice at multiple discrete interaction sites. The protein is Microtubule-associated protein mmb1 of Schizosaccharomyces pombe (strain 972 / ATCC 24843) (Fission yeast).